A 302-amino-acid chain; its full sequence is Probable 2-(5''-triphosphoribosyl)-3'-dephosphocoenzyme-A synthase 1 (302 aa).

Belongs to the CitG/MdcB family.

The catalysed reaction is 3'-dephospho-CoA + ATP = 2'-(5''-triphospho-alpha-D-ribosyl)-3'-dephospho-CoA + adenine. The chain is Probable 2-(5''-triphosphoribosyl)-3'-dephosphocoenzyme-A synthase 1 from Salmonella typhi.